Here is a 370-residue protein sequence, read N- to C-terminus: Uroporphyrinogen decarboxylase (370 aa).

Residues 29–33 (RQAGR), Asp79, Tyr155, Ser210, and His342 contribute to the substrate site.

It belongs to the uroporphyrinogen decarboxylase family. As to quaternary structure, homodimer.

Its subcellular location is the cytoplasm. The catalysed reaction is uroporphyrinogen III + 4 H(+) = coproporphyrinogen III + 4 CO2. It functions in the pathway porphyrin-containing compound metabolism; protoporphyrin-IX biosynthesis; coproporphyrinogen-III from 5-aminolevulinate: step 4/4. Functionally, catalyzes the decarboxylation of four acetate groups of uroporphyrinogen-III to yield coproporphyrinogen-III. The sequence is that of Uroporphyrinogen decarboxylase from Verminephrobacter eiseniae (strain EF01-2).